The sequence spans 108 residues: Nucleoid-associated protein BQ02190 (108 aa).

The protein belongs to the YbaB/EbfC family. Homodimer.

The protein resides in the cytoplasm. Its subcellular location is the nucleoid. Its function is as follows. Binds to DNA and alters its conformation. May be involved in regulation of gene expression, nucleoid organization and DNA protection. The polypeptide is Nucleoid-associated protein BQ02190 (Bartonella quintana (strain Toulouse) (Rochalimaea quintana)).